The following is an 84-amino-acid chain: Acyl carrier protein homolog (84 aa).

The Carrier domain occupies 4 to 79 (RDILLKIKEI…ELIAEVKHLI (76 aa)). Ser39 is subject to O-(pantetheine 4'-phosphoryl)serine.

Post-translationally, 4'-phosphopantetheine is transferred from CoA to a specific serine of the apo-ACP-like protein.

It functions in the pathway lipid metabolism; fatty acid biosynthesis. Functionally, carrier of the growing fatty acid chain in fatty acid biosynthesis. This chain is Acyl carrier protein homolog, found in Mycoplasma pneumoniae (strain ATCC 29342 / M129 / Subtype 1) (Mycoplasmoides pneumoniae).